Reading from the N-terminus, the 451-residue chain is Proton-coupled amino acid transporter-like protein acs (451 aa).

At 1–48 the chain is on the cytoplasmic side; sequence MNDDIKTVTVYPTTLELTTPTKSANGSNDDYDPHQHRELKNPTTNFQT. Residues 49 to 69 form a helical membrane-spanning segment; the sequence is FAHFLKASVGTGVLAMPSAFA. The Extracellular portion of the chain corresponds to 70 to 80; it reads HAGYVNGTLLT. Asparagine 75 carries an N-linked (GlcNAc...) asparagine glycan. The helical transmembrane segment at 81–101 threads the bilayer; sequence LIIGSLALYCLHILIKCMYIL. Topologically, residues 102 to 136 are cytoplasmic; it reads CKRQRVPYVSFSQAMNLGLKQGPPWLRCLAPIAVP. Residues 137–157 traverse the membrane as a helical segment; it reads FVDGFLAFYHFGICCVYVVFI. The Extracellular segment spans residues 158 to 167; the sequence is AESIKQLVDE. Residues 168 to 188 form a helical membrane-spanning segment; the sequence is YLVVWDVRIHMCIIIVPLLLI. Topologically, residues 189-199 are cytoplasmic; the sequence is YSIKNLKLLAP. A helical transmembrane segment spans residues 200 to 220; it reads FSSAANLLLLVGFGIILYYIF. The Extracellular segment spans residues 221 to 237; the sequence is EELPPLSERDPFVAAGK. Residues 238–258 traverse the membrane as a helical segment; that stretch reads LPTFFGTVLFALEAVGVILAI. The Cytoplasmic portion of the chain corresponds to 259–272; it reads EENMATPKSFVGPC. A helical membrane pass occupies residues 273–293; that stretch reads GILNSGMSIVLGLYVLLGFFG. Residues 294–320 lie on the Extracellular side of the membrane; sequence YWKYGNESEGSITLNIPQSEIPAQVVK. N-linked (GlcNAc...) asparagine glycosylation occurs at asparagine 299. The helical transmembrane segment at 321–341 threads the bilayer; the sequence is VFFAITTWISYALQGYVTAHI. The Cytoplasmic portion of the chain corresponds to 342 to 357; the sequence is LWDKYLAKRFKETRQT. Residues 358 to 378 form a helical membrane-spanning segment; that stretch reads FYELIFRAIIVLLTFGCAVAI. Topologically, residues 379-382 are extracellular; the sequence is PDLS. The chain crosses the membrane as a helical span at residues 383–403; the sequence is VFLSLVGSFCLSILGLIFPVL. Topologically, residues 404–420 are cytoplasmic; sequence LQICVQYTEGYGPFRIK. The helical transmembrane segment at 421-441 threads the bilayer; the sequence is LIINLLLLCFGIFGGVVGTYV. The Extracellular segment spans residues 442–451; the sequence is SILDIIAVYK.

Belongs to the amino acid/polyamine transporter 2 family. In terms of tissue distribution, expressed in the proximal and distal regions of the midgut; expressed in enterocytes and progenitor cells. Expression increases in response to intestinal bacterial infection and spreads further into the midgut, eventually covering the entire midgut.

The protein resides in the cell membrane. It localises to the late endosome membrane. The protein localises to the lysosome membrane. Its subcellular location is the basal cell membrane. Amino acid transporter which has pH-dependent electrogenic transport activity for alanine, glycine and proline. Plays a role in positive regulation of growth by directly or indirectly modulating the effects of the TOR signaling pathway. Required in enterocytes for the efficient recovery of gut epithelium following the cytoplasmic purge response to bacterial infection. Acts cell-autonomously to promote the retrograde transport of amino acids into the intestinal epithelium. Acts non-cell-autonomously through the insulin signaling pathway to stimulate Myc expression and the release of amino acids from nutrient stores into the hemolymph. The sequence is that of Proton-coupled amino acid transporter-like protein acs from Drosophila melanogaster (Fruit fly).